A 501-amino-acid polypeptide reads, in one-letter code: Lysine--tRNA ligase (501 aa).

Positions 404 and 411 each coordinate Mg(2+).

It belongs to the class-II aminoacyl-tRNA synthetase family. Homodimer. The cofactor is Mg(2+).

Its subcellular location is the cytoplasm. The enzyme catalyses tRNA(Lys) + L-lysine + ATP = L-lysyl-tRNA(Lys) + AMP + diphosphate. The sequence is that of Lysine--tRNA ligase (lysS) from Campylobacter jejuni subsp. jejuni serotype O:2 (strain ATCC 700819 / NCTC 11168).